The sequence spans 415 residues: Gamma-glutamyl phosphate reductase (415 aa).

This sequence belongs to the gamma-glutamyl phosphate reductase family.

Its subcellular location is the cytoplasm. It carries out the reaction L-glutamate 5-semialdehyde + phosphate + NADP(+) = L-glutamyl 5-phosphate + NADPH + H(+). Its pathway is amino-acid biosynthesis; L-proline biosynthesis; L-glutamate 5-semialdehyde from L-glutamate: step 2/2. Catalyzes the NADPH-dependent reduction of L-glutamate 5-phosphate into L-glutamate 5-semialdehyde and phosphate. The product spontaneously undergoes cyclization to form 1-pyrroline-5-carboxylate. In Ligilactobacillus salivarius (strain UCC118) (Lactobacillus salivarius), this protein is Gamma-glutamyl phosphate reductase.